Consider the following 1103-residue polypeptide: MANTKYYPEVSSNANFAAIEREILKFWQDNNIFQKSIDGRNGESEFIFYDGPPFANGLPHYGHLLTGFIKDVYARYQTVKGKKVERRFGWDCHGLPAEMQSEKELGISGRLAITNFGIEKFNAHCRASVMEYASDWEEYVTRQARWVDFKNSYKTMDKNFMESVLWAFKELYNKGLLCESMRVVPYSWACETPLSNFETRLDNSYRERSDKAVTVSFVLRDKLHEIPAFAGMISRESEMTVGGDYQEYRILTWTTTPWTLPSNLAIAVGSDIDYALVPQENICYIIAASSVSKYAKELGLSGEENFEIIKGSQLQGLRYKPLFDYFEHHPNSFKIFDVDFVVEGDGTGVVHMAPGFGEDDQILCESKGISLVCPVDNSGKFTKEIPDLEGVQVFDANDKIIIKLKEQGNWLKTEQYIHNYPHCWRTDTPLIYKAVPSWYVKVTQFKDRMVELNQQINWIPHHVKDNLFGKWLENARDWSISRNRFWGTPLPVWKSDDPKYPRIDVYGSIEELEKDFGVKVTDLHRPFIDKLTRPNPNDPTGKSTMRRIEDVFDCWFESGSMPYGQAHYPFENKEWFEDHFPADFIVEYSAQTRGWFYTLMVLSTALFDRPPFLNCICHGVILDATGQKLSKRLNNYADPLELFDQYGSDALRVTMLSSNIVKGQELLIDKDGKMVFDTLRLFIKPIWSSYHFFTMYANADSLKGEISFASENVLDVYILSKLKIAVSKIEESLDNFDTQTAYHAVLEFFEVLNNWYIRRSRARFWKSEKDTDKQNAYNTLYSCLKTMAIAMSALVPMISEAIYKGLCHCEETSTLSSRDLIAGSSKSINNLNPVVKPRDYTPSVHHNDQISVHLCNYPTLSDFEINHELVATMDNVLDICSNSLFIRSTKNIRVRQPLASITIISKHNNDLKAFENLIKDEINVKSVIYCDDLENYASKKLSINFPMLGKRLPAKMKEIIAASKKGDWKAIAGGLTICGETLNNEEYKLILEPYSHIKGAASFENNSSLLILDLELTAELIEEGYARDIVRFIQQARKDAGFSITDRILIEIISEFDLSEIIYNYGDFITEQTLGEFSKNFTPDYVSKVELEDHPIQLKIKKS.

The short motif at 53–63 (PFANGLPHYGH) is the 'HIGH' region element. The 'KMSKS' region motif lies at 628–632 (KLSKR). Lys-631 contributes to the ATP binding site.

It belongs to the class-I aminoacyl-tRNA synthetase family. IleS type 2 subfamily. As to quaternary structure, monomer. Zn(2+) serves as cofactor.

It is found in the cytoplasm. The catalysed reaction is tRNA(Ile) + L-isoleucine + ATP = L-isoleucyl-tRNA(Ile) + AMP + diphosphate. Functionally, catalyzes the attachment of isoleucine to tRNA(Ile). As IleRS can inadvertently accommodate and process structurally similar amino acids such as valine, to avoid such errors it has two additional distinct tRNA(Ile)-dependent editing activities. One activity is designated as 'pretransfer' editing and involves the hydrolysis of activated Val-AMP. The other activity is designated 'posttransfer' editing and involves deacylation of mischarged Val-tRNA(Ile). In Rickettsia akari (strain Hartford), this protein is Isoleucine--tRNA ligase.